The chain runs to 366 residues: Cyanide hydratase (366 aa).

One can recognise a CN hydrolase domain in the interval 6-285 (YKAAAVTSEP…DGLMFVDIDL (280 aa)). The active-site Proton acceptor is Glu-46. The active site involves Lys-128. Catalysis depends on Cys-163, which acts as the Nucleophile.

This sequence belongs to the carbon-nitrogen hydrolase superfamily. Nitrilase family. As to quaternary structure, oligomer of dimers, forming left-handed helical fibers.

The enzyme catalyses formamide = hydrogen cyanide + H2O. Catalyzes the hydration of cyanide to formamide. Degradation of cyanide may be important for plant pathogenic fungi in infection of cyanogenic plants. Can also transform some nitriles like 2-cyanopyridine and fumaronitrile. This chain is Cyanide hydratase, found in Pyrenophora teres f. teres (strain 0-1) (Barley net blotch fungus).